A 318-amino-acid polypeptide reads, in one-letter code: L-lactate dehydrogenase (318 aa).

NAD(+)-binding positions include Val-17, Asp-38, Lys-43, Tyr-69, and 83 to 84; that span reads GA. Substrate-binding residues include Gln-86 and Arg-92. NAD(+)-binding positions include Ser-105, 122–124, and Ser-147; that span reads ATN. 124-127 contributes to the substrate binding site; the sequence is NPVD. 152-155 contributes to the substrate binding site; it reads DTAR. The beta-D-fructose 1,6-bisphosphate site is built by Lys-157 and His-172. The Proton acceptor role is filled by His-179. A Phosphotyrosine modification is found at Tyr-223. Thr-232 contributes to the substrate binding site.

Belongs to the LDH/MDH superfamily. LDH family. As to quaternary structure, homotetramer.

The protein resides in the cytoplasm. It catalyses the reaction (S)-lactate + NAD(+) = pyruvate + NADH + H(+). It functions in the pathway fermentation; pyruvate fermentation to lactate; (S)-lactate from pyruvate: step 1/1. Its activity is regulated as follows. Allosterically activated by fructose 1,6-bisphosphate (FBP). In terms of biological role, catalyzes the conversion of lactate to pyruvate. The protein is L-lactate dehydrogenase of Staphylococcus saprophyticus subsp. saprophyticus (strain ATCC 15305 / DSM 20229 / NCIMB 8711 / NCTC 7292 / S-41).